Consider the following 440-residue polypeptide: Tyrosine--tRNA ligase (440 aa).

Tyrosine 46 serves as a coordination point for L-tyrosine. Positions 51 to 60 (PTAASLHIGN) match the 'HIGH' region motif. L-tyrosine-binding residues include tyrosine 181 and glutamine 185. Residues 241–245 (KFGKS) carry the 'KMSKS' region motif. Lysine 244 is a binding site for ATP. An S4 RNA-binding domain is found at 373-439 (DRVIDAAQAA…GKKALGAVEN (67 aa)).

It belongs to the class-I aminoacyl-tRNA synthetase family. TyrS type 1 subfamily. In terms of assembly, homodimer.

The protein resides in the cytoplasm. The enzyme catalyses tRNA(Tyr) + L-tyrosine + ATP = L-tyrosyl-tRNA(Tyr) + AMP + diphosphate + H(+). In terms of biological role, catalyzes the attachment of tyrosine to tRNA(Tyr) in a two-step reaction: tyrosine is first activated by ATP to form Tyr-AMP and then transferred to the acceptor end of tRNA(Tyr). This chain is Tyrosine--tRNA ligase, found in Bifidobacterium longum (strain NCC 2705).